The following is a 138-amino-acid chain: MLQPSRRKYRKEQKGRNTGLATRGTHVSFGEFGLKATGRGRLTARQIEAARRAINRHIKRGGRIWIRIFPDKPISQKPAEVRMGNGKGNPEYWVAEIQPGKVLYEMEGVSEELAREAFRLAAAKLPISTTFVARHIGA.

The segment covering 1 to 13 (MLQPSRRKYRKEQ) has biased composition (basic residues). The disordered stretch occupies residues 1 to 22 (MLQPSRRKYRKEQKGRNTGLAT).

This sequence belongs to the universal ribosomal protein uL16 family. As to quaternary structure, part of the 50S ribosomal subunit.

Binds 23S rRNA and is also seen to make contacts with the A and possibly P site tRNAs. In Bordetella petrii (strain ATCC BAA-461 / DSM 12804 / CCUG 43448), this protein is Large ribosomal subunit protein uL16.